The primary structure comprises 313 residues: Ribosomal RNA small subunit methyltransferase H (313 aa).

S-adenosyl-L-methionine-binding positions include glycine 35–histidine 37, aspartate 55, phenylalanine 79, aspartate 100, and glutamine 107.

This sequence belongs to the methyltransferase superfamily. RsmH family.

Its subcellular location is the cytoplasm. The catalysed reaction is cytidine(1402) in 16S rRNA + S-adenosyl-L-methionine = N(4)-methylcytidine(1402) in 16S rRNA + S-adenosyl-L-homocysteine + H(+). In terms of biological role, specifically methylates the N4 position of cytidine in position 1402 (C1402) of 16S rRNA. The polypeptide is Ribosomal RNA small subunit methyltransferase H (Burkholderia ambifaria (strain MC40-6)).